Consider the following 211-residue polypeptide: Dephospho-CoA kinase (211 aa).

The DPCK domain occupies 2–204 (IIGLTGSIGM…SGVRRWRRGK (203 aa)). 10–15 (GMGKST) is a binding site for ATP.

The protein belongs to the CoaE family.

Its subcellular location is the cytoplasm. It carries out the reaction 3'-dephospho-CoA + ATP = ADP + CoA + H(+). It participates in cofactor biosynthesis; coenzyme A biosynthesis; CoA from (R)-pantothenate: step 5/5. Catalyzes the phosphorylation of the 3'-hydroxyl group of dephosphocoenzyme A to form coenzyme A. The sequence is that of Dephospho-CoA kinase from Rhodospirillum rubrum (strain ATCC 11170 / ATH 1.1.1 / DSM 467 / LMG 4362 / NCIMB 8255 / S1).